The sequence spans 75 residues: MPTQEAKAHHVGEWASLRNTSPEIAEAIFEVAGYDEKMAEKIWEEGSDEVLVKAFAKTDKDSLFWGEQTIERKNV.

This is an uncharacterized protein from Escherichia coli O6:H1 (strain CFT073 / ATCC 700928 / UPEC).